Consider the following 177-residue polypeptide: Large ribosomal subunit protein uL6 (177 aa).

This sequence belongs to the universal ribosomal protein uL6 family. In terms of assembly, part of the 50S ribosomal subunit.

In terms of biological role, this protein binds to the 23S rRNA, and is important in its secondary structure. It is located near the subunit interface in the base of the L7/L12 stalk, and near the tRNA binding site of the peptidyltransferase center. This Buchnera aphidicola subsp. Acyrthosiphon kondoi (Acyrthosiphon kondoi symbiotic bacterium) protein is Large ribosomal subunit protein uL6.